Reading from the N-terminus, the 177-residue chain is Large ribosomal subunit protein uL5 (177 aa).

It belongs to the universal ribosomal protein uL5 family. Part of the 50S ribosomal subunit; part of the 5S rRNA/L5/L18/L25 subcomplex. Contacts the 5S rRNA and the P site tRNA. Forms a bridge to the 30S subunit in the 70S ribosome.

Its function is as follows. This is one of the proteins that bind and probably mediate the attachment of the 5S RNA into the large ribosomal subunit, where it forms part of the central protuberance. In the 70S ribosome it contacts protein S13 of the 30S subunit (bridge B1b), connecting the 2 subunits; this bridge is implicated in subunit movement. Contacts the P site tRNA; the 5S rRNA and some of its associated proteins might help stabilize positioning of ribosome-bound tRNAs. This is Large ribosomal subunit protein uL5 from Wolbachia sp. subsp. Brugia malayi (strain TRS).